A 638-amino-acid chain; its full sequence is Methionine--tRNA ligase (638 aa).

Residues 12–22 (YYPSDKLHIGH) carry the 'HIGH' region motif. The Zn(2+) site is built by C127, C130, C144, and C147. Positions 296–300 (KMSKS) match the 'KMSKS' region motif. K299 provides a ligand contact to ATP. One can recognise a tRNA-binding domain in the interval 538-638 (DFSKVQLRVA…KDIESGSKIS (101 aa)).

This sequence belongs to the class-I aminoacyl-tRNA synthetase family. MetG type 2A subfamily. As to quaternary structure, homodimer. Zn(2+) is required as a cofactor.

The protein resides in the cytoplasm. The catalysed reaction is tRNA(Met) + L-methionine + ATP = L-methionyl-tRNA(Met) + AMP + diphosphate. Functionally, is required not only for elongation of protein synthesis but also for the initiation of all mRNA translation through initiator tRNA(fMet) aminoacylation. The protein is Methionine--tRNA ligase (metG) of Caldanaerobacter subterraneus subsp. tengcongensis (strain DSM 15242 / JCM 11007 / NBRC 100824 / MB4) (Thermoanaerobacter tengcongensis).